We begin with the raw amino-acid sequence, 318 residues long: Oxidoreductase swnN (318 aa).

The protein belongs to the NmrA-type oxidoreductase family. Isoflavone reductase subfamily.

Its pathway is mycotoxin biosynthesis. Its function is as follows. Aminotransferase; part of the gene cluster that mediates the biosynthesis of swainsonine (SW), a cytotoxic fungal alkaloid and a potential cancer therapy drug. Swainsonine production occurs via a multibranched pathway and is dispensable for fungal colonization of plants and infection of insect hosts. The first step of swainsonine biosynthesis is the production of the precursor pipecolic acid (PA) via conversion of L-lysine (Lys) to 1-piperideine-6-carboxylate (P6C) by the aminotransferase swnA, the latter being further reduced to PA by the reductase swnR. The PKS-NRPS hybrid synthetase swnK uptakes and condensates PA and malonyl-CoA with and without skipping of the ketoreductase (KR) domain in order to produce 3 intermediates, 1-oxoindolizidine, (1S)-1-hydroxyindolizin, and (1R)-1-hydroxyindolizine; with the transisomer (1S)-1-hydroxyindolizin being predominant. The terminal thioester reductase (TE) domain of swnK is involved in reduction of the thioester bond to release the intermediate aldehydes. The oxidoreductase swnN could contribute to the reduction of 1-oxoindolizidine to (1S)-1-hydroxyindolizin and (1R)-1-hydroxyindolizine, contributing to the major route of SW production. The dioxygenase swnH2 would be responsible for the oxidization of (1R)-1-hydroxyindolizine into (1R,2S)-1,2-dihydroxyindolizine and of (1S)-1-hydroxyindolizin to yield both (1R,2S)-1,2-dihydroxyindolizine and (1S,2S)-1,2-dihydroxyindolizine. The dioxygenase swnH1 then performs the conversion of the 1,2-dihydroxyindolizine epimers to SW. This Arthroderma benhamiae (strain ATCC MYA-4681 / CBS 112371) (Trichophyton mentagrophytes) protein is Oxidoreductase swnN.